The following is a 118-amino-acid chain: Large ribosomal subunit protein uL24 (118 aa).

This sequence belongs to the universal ribosomal protein uL24 family. In terms of assembly, part of the 50S ribosomal subunit.

One of two assembly initiator proteins, it binds directly to the 5'-end of the 23S rRNA, where it nucleates assembly of the 50S subunit. Its function is as follows. One of the proteins that surrounds the polypeptide exit tunnel on the outside of the subunit. The chain is Large ribosomal subunit protein uL24 from Prochlorococcus marinus (strain NATL1A).